Consider the following 474-residue polypeptide: Glutathione synthetase (474 aa).

An N-acetylalanine modification is found at Ala2. Arg125 contributes to the substrate binding site. Glu144 serves as a coordination point for ATP. Mg(2+)-binding residues include Glu144 and Asn146. Residues 148 to 151, 214 to 216, Gln220, and 267 to 270 each bind substrate; these read VSAS, ERN, and RDGY. ATP is bound by residues Lys305, 364–373, Tyr375, and 398–401; these read KPQREGGGNN and MEKI. Position 368 (Glu368) interacts with Mg(2+). Residue Ser415 is modified to Phosphoserine. Glu425 contacts ATP. Arg450 contributes to the substrate binding site. Lys452 and Asp458 together coordinate ATP. Position 461-462 (461-462) interacts with substrate; the sequence is VA.

The protein belongs to the eukaryotic GSH synthase family. In terms of assembly, homodimer. Mg(2+) serves as cofactor.

It carries out the reaction gamma-L-glutamyl-L-cysteine + glycine + ATP = glutathione + ADP + phosphate + H(+). It catalyses the reaction gamma-L-glutamyl-(2S)-2-aminobutanoate + glycine + ATP = ophthalmate + ADP + phosphate + H(+). It functions in the pathway sulfur metabolism; glutathione biosynthesis; glutathione from L-cysteine and L-glutamate: step 2/2. In terms of biological role, catalyzes the production of glutathione from gamma-glutamylcysteine and glycine in an ATP-dependent manner. Glutathione (gamma-glutamylcysteinylglycine, GSH) is the most abundant intracellular thiol in living aerobic cells and is required for numerous processes including the protection of cells against oxidative damage, amino acid transport, the detoxification of foreign compounds, the maintenance of protein sulfhydryl groups in a reduced state and acts as a cofactor for a number of enzymes. Participates in ophthalmate biosynthesis in hepatocytes. The sequence is that of Glutathione synthetase from Bos taurus (Bovine).